The following is a 320-amino-acid chain: tRNA uridine(34) hydroxylase (320 aa).

The region spanning 125–221 is the Rhodanese domain; that stretch reads KEKRPLLLDV…YGLKQGSEHW (97 aa). The active-site Cysteine persulfide intermediate is the cysteine 181.

The protein belongs to the TrhO family.

The enzyme catalyses uridine(34) in tRNA + AH2 + O2 = 5-hydroxyuridine(34) in tRNA + A + H2O. In terms of biological role, catalyzes oxygen-dependent 5-hydroxyuridine (ho5U) modification at position 34 in tRNAs. The polypeptide is tRNA uridine(34) hydroxylase (Protochlamydia amoebophila (strain UWE25)).